Consider the following 323-residue polypeptide: Aspartate carbamoyltransferase catalytic subunit (323 aa).

The carbamoyl phosphate site is built by arginine 61 and threonine 62. Lysine 89 is an L-aspartate binding site. Carbamoyl phosphate is bound by residues arginine 111, histidine 144, and glutamine 147. Residues arginine 184 and arginine 238 each coordinate L-aspartate. Residues glycine 279 and proline 280 each contribute to the carbamoyl phosphate site.

It belongs to the aspartate/ornithine carbamoyltransferase superfamily. ATCase family. As to quaternary structure, heterododecamer (2C3:3R2) of six catalytic PyrB chains organized as two trimers (C3), and six regulatory PyrI chains organized as three dimers (R2).

It catalyses the reaction carbamoyl phosphate + L-aspartate = N-carbamoyl-L-aspartate + phosphate + H(+). The protein operates within pyrimidine metabolism; UMP biosynthesis via de novo pathway; (S)-dihydroorotate from bicarbonate: step 2/3. Its function is as follows. Catalyzes the condensation of carbamoyl phosphate and aspartate to form carbamoyl aspartate and inorganic phosphate, the committed step in the de novo pyrimidine nucleotide biosynthesis pathway. The polypeptide is Aspartate carbamoyltransferase catalytic subunit (Acaryochloris marina (strain MBIC 11017)).